Here is a 398-residue protein sequence, read N- to C-terminus: Phosphoglycerate kinase (398 aa).

Residues 21–23 (DFN), arginine 36, 59–62 (HLGR), arginine 119, and arginine 157 each bind substrate. Residues lysine 208, glycine 296, glutamate 327, and 354 to 357 (GGDS) each bind ATP.

It belongs to the phosphoglycerate kinase family. As to quaternary structure, monomer.

Its subcellular location is the cytoplasm. The catalysed reaction is (2R)-3-phosphoglycerate + ATP = (2R)-3-phospho-glyceroyl phosphate + ADP. Its pathway is carbohydrate degradation; glycolysis; pyruvate from D-glyceraldehyde 3-phosphate: step 2/5. This chain is Phosphoglycerate kinase, found in Streptococcus agalactiae serotype III (strain NEM316).